Reading from the N-terminus, the 1353-residue chain is Trifunctional purine biosynthetic protein adenosine-3 (1353 aa).

One can recognise an ATP-grasp domain in the interval 114 to 321 (KDFMLRHGIP…LFDVMEACCS (208 aa)). Residues 193–196 (EELL), Glu200, Arg223, and Asn232 each bind ATP. Mg(2+) contacts are provided by Glu291 and Asn293. Positions 441–1155 (GLSYKDSGVD…QKMLSQRRKR (715 aa)) are AIRS domain. A phosphoserine mark is found at Ser814 and Ser816. Residues 1153 to 1353 (RKRVAVLISG…ALISPEVSSQ (201 aa)) are GART domain. 1164 to 1166 (GSN) serves as a coordination point for N(1)-(5-phospho-beta-D-ribosyl)glycinamide. Residues Arg1219, 1244–1247 (MRVL), and Asn1261 each bind (6R)-10-formyltetrahydrofolate. The Proton donor role is filled by His1263. 1295-1299 (DEGVD) provides a ligand contact to (6R)-10-formyltetrahydrofolate. A N(1)-(5-phospho-beta-D-ribosyl)glycinamide-binding site is contributed by 1325-1328 (HKAE).

It in the N-terminal section; belongs to the GARS family. The protein in the central section; belongs to the AIR synthase family. In the C-terminal section; belongs to the GART family. As to quaternary structure, homodimer. It depends on Mg(2+) as a cofactor. Mn(2+) serves as cofactor.

The enzyme catalyses 5-phospho-beta-D-ribosylamine + glycine + ATP = N(1)-(5-phospho-beta-D-ribosyl)glycinamide + ADP + phosphate + H(+). It carries out the reaction 2-formamido-N(1)-(5-O-phospho-beta-D-ribosyl)acetamidine + ATP = 5-amino-1-(5-phospho-beta-D-ribosyl)imidazole + ADP + phosphate + H(+). It catalyses the reaction N(1)-(5-phospho-beta-D-ribosyl)glycinamide + (6R)-10-formyltetrahydrofolate = N(2)-formyl-N(1)-(5-phospho-beta-D-ribosyl)glycinamide + (6S)-5,6,7,8-tetrahydrofolate + H(+). The protein operates within purine metabolism; IMP biosynthesis via de novo pathway; 5-amino-1-(5-phospho-D-ribosyl)imidazole from N(2)-formyl-N(1)-(5-phospho-D-ribosyl)glycinamide: step 2/2. Its pathway is purine metabolism; IMP biosynthesis via de novo pathway; N(1)-(5-phospho-D-ribosyl)glycinamide from 5-phospho-alpha-D-ribose 1-diphosphate: step 2/2. It functions in the pathway purine metabolism; IMP biosynthesis via de novo pathway; N(2)-formyl-N(1)-(5-phospho-D-ribosyl)glycinamide from N(1)-(5-phospho-D-ribosyl)glycinamide (10-formyl THF route): step 1/1. Its function is as follows. Trifunctional enzyme that catalyzes three distinct reactions as part of the 'de novo' inosine monophosphate biosynthetic pathway. The sequence is that of Trifunctional purine biosynthetic protein adenosine-3 from Drosophila melanogaster (Fruit fly).